A 380-amino-acid polypeptide reads, in one-letter code: MNVKRKRVIVGMSGGVDSSVAALLLKKQGYDVIGIFMKYYNFECPWREDSIDAMLVSQSLKIPFYIIDITKNYKNLIIDYLYKEYKKGYTPNPDIICNSKIKFKFFLEKSIFLKSDFIATGHYVRKKEINENGKISYKIISGIDSNKDQSYFLCKLNKVQIKKSIFPLGWLNKKEVREIANKYNLINANKKDSQGICFIGKIKFLNFLKKKLAEKKGIIIEINKNSHIFKYKQKKLFSKKIEYKKEYGKIIGHHIGAHYFTKGQRKGLKIGGYKYPLFVIEKDITKNILYVGMGKNHPGLYTKVICIKKYNIHWINKKKIKTKIEVECRIRYRQNFKKATLYKKNNDLYVEFEIPQLAVNGGQFIVWYINNEVIGSGLIS.

ATP contacts are provided by residues 11 to 18 and Met-37; that span reads GMSGGVDS. The segment at 92 to 94 is interaction with target base in tRNA; the sequence is NPD. Cys-97 (nucleophile) is an active-site residue. Cys-97 and Cys-197 form a disulfide bridge. Residue Gly-121 participates in ATP binding. Residues 147–149 form an interaction with tRNA region; it reads KDQ. Cys-197 acts as the Cysteine persulfide intermediate in catalysis. Residues 331 to 332 are interaction with tRNA; it reads RY.

This sequence belongs to the MnmA/TRMU family.

The protein resides in the cytoplasm. The catalysed reaction is S-sulfanyl-L-cysteinyl-[protein] + uridine(34) in tRNA + AH2 + ATP = 2-thiouridine(34) in tRNA + L-cysteinyl-[protein] + A + AMP + diphosphate + H(+). Functionally, catalyzes the 2-thiolation of uridine at the wobble position (U34) of tRNA, leading to the formation of s(2)U34. This is tRNA-specific 2-thiouridylase MnmA from Karelsulcia muelleri (strain GWSS) (Sulcia muelleri).